The sequence spans 619 residues: MACVLLFRLFLLLVLAAFSQGKRLGPTSPLRYSRFLDPSRAVFLRWDFDYEAEIITFELQVQTTGWVGLGITDRYTFVGSDLVVGGVLPNGNVYFSDQHLLDEDTLEQDGSQDAELLRLTEDAVSTTMRFSRPFRTCDPHDRDITSDTMRVLAAYGPDDIPKMSREHTFVKSIFLLQMLQYDDQDAPEDTIIHDLKISNFIIPEDDTTYACTFLPLPIVSKKHHIYKFEPILVERNETMVHHVLVYACGNSSVLPTGIGECYGSDPAFSLCSHVIAGWAVGGLSYQFPDDVGISIGTPFDPQWIRLEIHYSNFQNLPGIRDTSGMRLFYTSHLRKYDMGVLQLGISVFPIHFIPPGAEAFLSYGLCKTDKFEELNGAPVSDIYISACLLHTHLAGRSLQALQYRNGTQLQVVCKDFSYDFNLQESRDLPHPVVIKPGDELLIECHYQTLDRDFMTFGGASTINEMCLIFFFYYPRINISSCMGYPDIIYVTNELGEEASENPMENLMVLDNVEWTPENIKKAEKACKESQQTVLIKTIDEEVENTTGWIPDIIPTPRGPCLESTGGKVEPQDNTPAGFRAVPLALSGSNTATLRPLPMIAVLFLQGSLSCLLAMLQTGV.

The N-terminal stretch at 1 to 21 (MACVLLFRLFLLLVLAAFSQG) is a signal peptide. The Extracellular portion of the chain corresponds to 22-594 (KRLGPTSPLR…LSGSNTATLR (573 aa)). Residues 40-156 (RAVFLRWDFD…DTMRVLAAYG (117 aa)) enclose the DOMON domain. Tyrosine 209 is a catalytic residue. Cystine bridges form between cysteine 211–cysteine 261 and cysteine 248–cysteine 271. Residues histidine 241 and histidine 242 each contribute to the Cu cation site. N-linked (GlcNAc...) asparagine glycosylation is present at asparagine 250. Residues histidine 309, histidine 390, and histidine 392 each coordinate Cu cation. 2 disulfides stabilise this stretch: cysteine 366-cysteine 481 and cysteine 444-cysteine 466. The active site involves histidine 390. N-linked (GlcNAc...) asparagine glycosylation occurs at asparagine 405. Methionine 465 is a binding site for Cu cation. Residue asparagine 477 is glycosylated (N-linked (GlcNAc...) asparagine). The chain crosses the membrane as a helical span at residues 595 to 615 (PLPMIAVLFLQGSLSCLLAML). The Cytoplasmic segment spans residues 616–619 (QTGV).

The protein belongs to the copper type II ascorbate-dependent monooxygenase family. The cofactor is Cu(2+). As to expression, expressed at low levels in thymus and testis.

It is found in the membrane. The protein is DBH-like monooxygenase protein 2 (Moxd2) of Mus musculus (Mouse).